The chain runs to 479 residues: 6-phosphogluconate dehydrogenase, decarboxylating (479 aa).

Residues 9–14 (GLAVMG), 32–34 (NRT), 74–76 (IQA), and N102 each bind NADP(+). Residues N102 and 128–130 (SGG) contribute to the substrate site. The Proton acceptor role is filled by K182. 185-186 (HN) contacts substrate. The active-site Proton donor is the E189. Residues Y190, K259, R286, R446, and H452 each contribute to the substrate site.

This sequence belongs to the 6-phosphogluconate dehydrogenase family. In terms of assembly, homodimer.

It catalyses the reaction 6-phospho-D-gluconate + NADP(+) = D-ribulose 5-phosphate + CO2 + NADPH. It functions in the pathway carbohydrate degradation; pentose phosphate pathway; D-ribulose 5-phosphate from D-glucose 6-phosphate (oxidative stage): step 3/3. Its function is as follows. Catalyzes the oxidative decarboxylation of 6-phosphogluconate to ribulose 5-phosphate and CO(2), with concomitant reduction of NADP to NADPH. This chain is 6-phosphogluconate dehydrogenase, decarboxylating (gnd), found in Chlamydia pneumoniae (Chlamydophila pneumoniae).